The sequence spans 398 residues: MAKEKYDRSKPHVNIGTIGHVDHGKTTLTAAITTVLARRLPSSVNQPKDYASIDAAPEERERGITINTAHVEYETATRHYAHIDAPGHADYVKNMITGAAQMDGAILVVASTDGPMPQTREHILLSRQVGVKHLIVFMNKVDLVDDEELLELVEMEIRDLLSEYDFPGDDLPVIQGSALKALEGDTKFEDIIMELMDTVDSYIPEPERDTDKPLLLPVEDVFSITGRGTVASGRIDRGTVRVNDEIEIVGIKEETKKAVVTGVEMFRKQLDEGLAGDNVGILLRGVQRDEIERGQVIAKPGSINPHTKFKGEVYILSKDEGGRHTPFFNNYRPQFYFRTTDVTGSIELPAGTEMVMPGDNVTINVELIHPIAVEQGTTFSIREGGRTVGSGIVSEIEA.

Positions 10-207 (KPHVNIGTIG…TVDSYIPEPE (198 aa)) constitute a tr-type G domain. Residues 19–26 (GHVDHGKT) form a G1 region. 19–26 (GHVDHGKT) is a GTP binding site. Thr-26 is a binding site for Mg(2+). Positions 63–67 (GITIN) are G2. Positions 84–87 (DAPG) are G3. GTP contacts are provided by residues 84-88 (DAPGH) and 139-142 (NKVD). The segment at 139 to 142 (NKVD) is G4. A G5 region spans residues 177 to 179 (SAL).

The protein belongs to the TRAFAC class translation factor GTPase superfamily. Classic translation factor GTPase family. EF-Tu/EF-1A subfamily. In terms of assembly, monomer.

It is found in the cytoplasm. The catalysed reaction is GTP + H2O = GDP + phosphate + H(+). GTP hydrolase that promotes the GTP-dependent binding of aminoacyl-tRNA to the A-site of ribosomes during protein biosynthesis. This is Elongation factor Tu from Streptococcus pyogenes serotype M28 (strain MGAS6180).